A 324-amino-acid chain; its full sequence is MKPSVILYKALPDDLLQRLQAHFTVHQVANLSPQTVVQNAAIFAEAEGLLGSNENVDAALLEKMPKLRATSTISVGYDNFDVDALTARKILLMHTPTVLTETVADTLMALVLSTARRVVEVAERVKAGEWTASIGPDWYGTDVHHKTLGIVGMGRIGMALAQRVHFGFNMPILYNARRHHKEAEERFNARYCDLDTLLQESDFVCLILPLTDETHHLFGAEQFAKMKSSAIFINAGRGPVVDENALIAALQKGEIHAAGLDVFEQEPLSVDSPLLSMANVVAVPHIGSATHETRYGMAACAVDNLIDALQGKVEKNCVNPHVAD.

Catalysis depends on residues Arg-237 and Glu-266. His-285 acts as the Proton donor in catalysis.

Belongs to the D-isomer specific 2-hydroxyacid dehydrogenase family. GhrB subfamily. Homodimer.

The protein resides in the cytoplasm. The catalysed reaction is glycolate + NADP(+) = glyoxylate + NADPH + H(+). It catalyses the reaction (R)-glycerate + NAD(+) = 3-hydroxypyruvate + NADH + H(+). The enzyme catalyses (R)-glycerate + NADP(+) = 3-hydroxypyruvate + NADPH + H(+). In terms of biological role, catalyzes the NADPH-dependent reduction of glyoxylate and hydroxypyruvate into glycolate and glycerate, respectively. This Shigella flexneri protein is Glyoxylate/hydroxypyruvate reductase B.